Here is a 99-residue protein sequence, read N- to C-terminus: Large ribosomal subunit protein uL23 (99 aa).

It belongs to the universal ribosomal protein uL23 family. As to quaternary structure, part of the 50S ribosomal subunit. Contacts protein L29, and trigger factor when it is bound to the ribosome.

Functionally, one of the early assembly proteins it binds 23S rRNA. One of the proteins that surrounds the polypeptide exit tunnel on the outside of the ribosome. Forms the main docking site for trigger factor binding to the ribosome. The protein is Large ribosomal subunit protein uL23 of Francisella philomiragia subsp. philomiragia (strain ATCC 25017 / CCUG 19701 / FSC 153 / O#319-036).